A 632-amino-acid chain; its full sequence is Signal-transduction and transcriptional-control protein (632 aa).

The region spanning 197–270 is the PAS domain; sequence TYQYLNKITD…GQSYEDEEIM (74 aa). The region spanning 324-554 is the Sigma-54 factor interaction domain; that stretch reads IIGQSEAMKR…LENCIENIVN (231 aa). ATP contacts are provided by residues 352 to 359 and 416 to 425; these read GESGTGKE and ANEGTLFLDE. The H-T-H motif DNA-binding region spans 606 to 625; sequence ISKACRILGINRSTLYIKIK.

This chain is Signal-transduction and transcriptional-control protein (stc), found in Clostridium beijerinckii (Clostridium MP).